Reading from the N-terminus, the 183-residue chain is Large ribosomal subunit protein eL18 (183 aa).

The segment at Arg150–Val183 is disordered. A compositionally biased stretch (basic residues) spans Ser161 to Val183.

It belongs to the eukaryotic ribosomal protein eL18 family.

It is found in the cytoplasm. The polypeptide is Large ribosomal subunit protein eL18 (RpL18) (Spodoptera frugiperda (Fall armyworm)).